A 429-amino-acid polypeptide reads, in one-letter code: Glutamate-1-semialdehyde 2,1-aminomutase 2 (429 aa).

The residue at position 268 (Lys268) is an N6-(pyridoxal phosphate)lysine.

It belongs to the class-III pyridoxal-phosphate-dependent aminotransferase family. HemL subfamily. As to quaternary structure, homodimer. Pyridoxal 5'-phosphate is required as a cofactor.

The protein resides in the cytoplasm. It catalyses the reaction (S)-4-amino-5-oxopentanoate = 5-aminolevulinate. It functions in the pathway porphyrin-containing compound metabolism; protoporphyrin-IX biosynthesis; 5-aminolevulinate from L-glutamyl-tRNA(Glu): step 2/2. This chain is Glutamate-1-semialdehyde 2,1-aminomutase 2, found in Bacillus cereus (strain ATCC 10987 / NRS 248).